Consider the following 404-residue polypeptide: AT-hook motif nuclear-localized protein 6 (404 aa).

The tract at residues 40 to 112 (TTVVTPLPPP…TPISSSIPLS (73 aa)) is disordered. A compositionally biased stretch (pro residues) spans 45–55 (PLPPPPAPSSA). A compositionally biased stretch (low complexity) spans 56-70 (PVPTTVTPGSATAST). The Bipartite nuclear localization signal motif lies at 76–84 (KKKRGRPRK). A DNA-binding region (a.T hook) is located at residues 76 to 88 (KKKRGRPRKYAPD). Residues 98 to 112 (PTLSPTPISSSIPLS) are compositionally biased toward low complexity. One can recognise a PPC domain in the interval 157 to 299 (GANFTTHQFT…RVMEAFAPPQ (143 aa)). The segment at 365 to 404 (AYHGYGNMNTGTTHKEEHEDEDGGDDDDDSGDTRSQSHSG) is disordered. The span at 382-394 (HEDEDGGDDDDDS) shows a compositional bias: acidic residues.

It is found in the nucleus. In terms of biological role, transcription factor that specifically binds AT-rich DNA sequences related to the nuclear matrix attachment regions (MARs). The sequence is that of AT-hook motif nuclear-localized protein 6 from Arabidopsis thaliana (Mouse-ear cress).